Reading from the N-terminus, the 222-residue chain is MRVRLGALAGAAALSGALSFVLLAAAIGTDFWYIIDTERLERSSQRMRDQGPANRSQQEPLSSHSGLWRTCRVQSSCTPLMNPFWQENVTVSDSSRQLLTMHGTFVILLPLSLIVMVFGGMTGFLSFLLRAHLLLLLTGILFLFGAMVTLTGISIYIAYSAVAFREAVCLLEERALLDQVDIRFGWSLALGWISFVSELLTGVVFLAAARALSLSQRQDQAI.

A helical transmembrane segment spans residues 7-27 (ALAGAAALSGALSFVLLAAAI). N-linked (GlcNAc...) asparagine glycosylation is found at N54 and N88. 3 helical membrane-spanning segments follow: residues 105 to 125 (FVIL…TGFL), 133 to 153 (LLLL…LTGI), and 188 to 208 (LALG…FLAA).

It is found in the cell junction. Its subcellular location is the tight junction. It localises to the lateral cell membrane. The protein localises to the apical cell membrane. The sequence is that of Transmembrane protein 114 from Mus musculus (Mouse).